The chain runs to 427 residues: Trigger factor (427 aa).

Residues 163–248 (GDTVVIDFVG…IHEVKAKEVP (86 aa)) form the PPIase FKBP-type domain.

Belongs to the FKBP-type PPIase family. Tig subfamily.

It is found in the cytoplasm. The enzyme catalyses [protein]-peptidylproline (omega=180) = [protein]-peptidylproline (omega=0). Involved in protein export. Acts as a chaperone by maintaining the newly synthesized protein in an open conformation. Functions as a peptidyl-prolyl cis-trans isomerase. The chain is Trigger factor from Streptococcus pneumoniae (strain ATCC 700669 / Spain 23F-1).